We begin with the raw amino-acid sequence, 194 residues long: Molybdenum cofactor guanylyltransferase (194 aa).

Residues 12-14 (LAG), K25, N53, D71, and D101 contribute to the GTP site. D101 contacts Mg(2+).

The protein belongs to the MobA family. As to quaternary structure, monomer. An equilibrium exists between a monomeric and oligomeric form of the enzyme, which could be an octamer; whether this oligomeric arrangement is of functional relevance is unclear. Interacts with MoeA and MobB in vivo. It depends on Mg(2+) as a cofactor. Mn(2+) serves as cofactor.

Its subcellular location is the cytoplasm. The catalysed reaction is Mo-molybdopterin + GTP + H(+) = Mo-molybdopterin guanine dinucleotide + diphosphate. Functionally, transfers a GMP moiety from GTP to Mo-molybdopterin (Mo-MPT) cofactor (Moco or molybdenum cofactor) to form Mo-molybdopterin guanine dinucleotide (Mo-MGD) cofactor. Is also involved in the biosynthesis of the bis-MGD form of the Moco cofactor (Mo-bisMGD) in which the metal is symmetrically ligated by the dithiolene groups of two MGD molecules. Is necessary and sufficient for the in vitro activation of the DMSOR molybdoenzyme that uses the Mo-bisMGD form of molybdenum cofactor, which implies formation and efficient insertion of the cofactor into the enzyme without the need of a chaperone. Is specific for GTP since other nucleotides such as ATP and GMP cannot be utilized. The sequence is that of Molybdenum cofactor guanylyltransferase (mobA) from Escherichia coli (strain K12).